The following is a 272-amino-acid chain: Undecaprenyl-diphosphatase (272 aa).

Helical transmembrane passes span 1-21, 38-58, 84-104, 112-132, 145-165, 183-203, 219-239, and 250-270; these read MSYL…FLPI, PGAT…VVFF, VRMG…GYLF, FRSL…LGLA, MTYG…VPGV, PVAA…SGLY, QTAV…AGLM, and FVVY…TGAI.

The protein belongs to the UppP family.

The protein resides in the cell membrane. It catalyses the reaction di-trans,octa-cis-undecaprenyl diphosphate + H2O = di-trans,octa-cis-undecaprenyl phosphate + phosphate + H(+). Catalyzes the dephosphorylation of undecaprenyl diphosphate (UPP). Confers resistance to bacitracin. This chain is Undecaprenyl-diphosphatase, found in Clavibacter michiganensis subsp. michiganensis (strain NCPPB 382).